Consider the following 309-residue polypeptide: Methionyl-tRNA formyltransferase (309 aa).

109–112 (SLLP) contributes to the (6S)-5,6,7,8-tetrahydrofolate binding site.

It belongs to the Fmt family.

The catalysed reaction is L-methionyl-tRNA(fMet) + (6R)-10-formyltetrahydrofolate = N-formyl-L-methionyl-tRNA(fMet) + (6S)-5,6,7,8-tetrahydrofolate + H(+). In terms of biological role, attaches a formyl group to the free amino group of methionyl-tRNA(fMet). The formyl group appears to play a dual role in the initiator identity of N-formylmethionyl-tRNA by promoting its recognition by IF2 and preventing the misappropriation of this tRNA by the elongation apparatus. This is Methionyl-tRNA formyltransferase from Clostridium botulinum (strain Alaska E43 / Type E3).